We begin with the raw amino-acid sequence, 227 residues long: 2-C-methyl-D-erythritol 4-phosphate cytidylyltransferase (227 aa).

It belongs to the IspD/TarI cytidylyltransferase family. IspD subfamily.

The catalysed reaction is 2-C-methyl-D-erythritol 4-phosphate + CTP + H(+) = 4-CDP-2-C-methyl-D-erythritol + diphosphate. It participates in isoprenoid biosynthesis; isopentenyl diphosphate biosynthesis via DXP pathway; isopentenyl diphosphate from 1-deoxy-D-xylulose 5-phosphate: step 2/6. Catalyzes the formation of 4-diphosphocytidyl-2-C-methyl-D-erythritol from CTP and 2-C-methyl-D-erythritol 4-phosphate (MEP). This Dehalococcoides mccartyi (strain CBDB1) protein is 2-C-methyl-D-erythritol 4-phosphate cytidylyltransferase.